The following is a 781-amino-acid chain: Molybdenum cofactor sulfurase (781 aa).

N6-(pyridoxal phosphate)lysine is present on Lys-246. Cys-413 is an active-site residue. Positions 635–781 constitute an MOSC domain; sequence LRLLRQSGQR…MTCGDVVLVE (147 aa). Phosphoserine is present on Ser-734.

This sequence belongs to the class-V pyridoxal-phosphate-dependent aminotransferase family. MOCOS subfamily. The cofactor is pyridoxal 5'-phosphate.

The catalysed reaction is Mo-molybdopterin + L-cysteine + AH2 = thio-Mo-molybdopterin + L-alanine + A + H2O. It participates in cofactor biosynthesis; molybdopterin biosynthesis. In terms of biological role, sulfurates the molybdenum cofactor. Sulfation of molybdenum is essential for xanthine dehydrogenase (XDH) and aldehyde oxidase (ADO) enzymes in which molybdenum cofactor is liganded by 1 oxygen and 1 sulfur atom in active form. The chain is Molybdenum cofactor sulfurase from Drosophila melanogaster (Fruit fly).